Consider the following 1026-residue polypeptide: Translation initiation factor IF-2, chloroplastic (1026 aa).

The N-terminal 63 residues, 1–63 (MPSMLVLVGT…KKWLCRYSVS (63 aa)), are a transit peptide targeting the chloroplast. The segment covering 158–173 (AEKLEIPKPGNKEGGE) has biased composition (basic and acidic residues). 3 disordered regions span residues 158–208 (AEKL…TMKS), 230–284 (FNRG…PPVK), and 300–393 (VSEE…KWSK). Over residues 178-194 (SQPSANSSNSRNGSYAN) the composition is skewed to polar residues. The segment covering 254–269 (LAPPQPPFRPQPPVRP) has biased composition (pro residues). Residues 306–317 (SSVKSKERKPIL) are compositionally biased toward basic and acidic residues. Residues 384–393 (SGRKGRKWSK) show a composition bias toward basic residues. One can recognise a tr-type G domain in the interval 499-672 (DRPPVITIMG…MLVAELQELK (174 aa)). The G1 stretch occupies residues 508–515 (GHVDHGKT). 508–515 (GHVDHGKT) lines the GTP pocket. Positions 533–537 (GITQG) are G2. The segment at 558-561 (DTPG) is G3. Residues 558–562 (DTPGH) and 612–615 (NKID) each bind GTP. A G4 region spans residues 612–615 (NKID). The segment at 648–650 (SAL) is G5.

It belongs to the TRAFAC class translation factor GTPase superfamily. Classic translation factor GTPase family. IF-2 subfamily.

It localises to the plastid. The protein localises to the chloroplast. One of the essential components for the initiation of protein synthesis. Protects formylmethionyl-tRNA from spontaneous hydrolysis and promotes its binding to the 30S ribosomal subunits. Also involved in the hydrolysis of GTP during the formation of the 70S ribosomal complex. This is Translation initiation factor IF-2, chloroplastic from Arabidopsis thaliana (Mouse-ear cress).